We begin with the raw amino-acid sequence, 889 residues long: Voltage-gated potassium channel KCNC3 (889 aa).

Residues 1–80 (MLSSVCVWSF…CSGLPAVAMG (80 aa)) form an important for normal N-type inactivation region. Over 1–291 (MLSSVCVWSF…EDPYSSRAAR (291 aa)) the chain is Cytoplasmic. Residues 10-66 (FSGRQGTRKQHSQPAPTPQPPESSPPPLLPPPQQQCAQPGTAASPAGAPLSCGPGGR) are disordered. The span at 24-42 (APTPQPPESSPPPLLPPPQ) shows a compositional bias: pro residues. Zn(2+) contacts are provided by His159, Cys165, Cys186, and Cys187. The segment at 202-231 (DSFEAPDSSGNANANAGGAHDAGLDDEAGA) is disordered. The segment covering 211-222 (GNANANAGGAHD) has biased composition (low complexity). The helical transmembrane segment at 292–310 (YVAFASLFFILISITTFCL) threads the bilayer. Asn321 is a glycosylation site (N-linked (GlcNAc...) asparagine). Residues 352–371 (VEGVCVVWFTFEFLMRVTFC) form a helical membrane-spanning segment. The Cytoplasmic portion of the chain corresponds to 372–380 (PDKVEFLKS). A helical membrane pass occupies residues 381 to 399 (SLNIIDCVAILPFYLEVGL). The helical; Voltage-sensor transmembrane segment at 413 to 435 (FLRVVRFVRILRIFKLTRHFVGL) threads the bilayer. At 436 to 448 (RVLGHTLRASTNE) the chain is on the cytoplasmic side. A helical membrane pass occupies residues 449–470 (FLLLIIFLALGVLIFATMIYYA). Positions 504, 505, 506, and 507 each coordinate K(+). Residues 504–509 (TLGYGD) carry the Selectivity filter motif. A helical transmembrane segment spans residues 519–540 (LVGALCALAGVLTIAMPVPVIV). The Cytoplasmic portion of the chain corresponds to 541-889 (NNFGMYYSLA…FPSRHSSPAV (349 aa)). Disordered regions lie at residues 557–627 (PKKK…LLRG), 691–834 (IDQP…PQSL), and 852–889 (TLGF…SPAV). An Omega-N-methylarginine modification is found at Arg626. Residues Ser697 and Ser702 each carry the phosphoserine modification. Over residues 748–764 (SQAPPASCPTSTPTQQP) the composition is skewed to low complexity. Thr759 carries the post-translational modification Phosphothreonine. Residues 794–808 (HRSHQPPGKHQRGGR) are compositionally biased toward basic residues.

Belongs to the potassium channel family. C (Shaw) (TC 1.A.1.2) subfamily. Kv3.3/KCNC3 sub-subfamily. In terms of assembly, homotetramer. Heterotetramer with KCNC1. Interacts (via C-terminus) with HAX1; this interaction modulates channel gating. Identified in a complex with ACTR3, a subunit of the Arp2/3 complex; this interaction is indirect and depends on the presence of HAX1. In terms of processing, N-glycosylated. Detected on Purkinje cells in the cerebellum molecular layer (at protein level).

The protein resides in the cell membrane. It localises to the presynaptic cell membrane. It is found in the perikaryon. The protein localises to the cell projection. Its subcellular location is the axon. The protein resides in the dendrite. It localises to the dendritic spine membrane. It is found in the cytoplasm. The protein localises to the cell cortex. Its subcellular location is the cytoskeleton. It carries out the reaction K(+)(in) = K(+)(out). Voltage-gated potassium channel that plays an important role in the rapid repolarization of fast-firing brain neurons. The channel opens in response to the voltage difference across the membrane, forming a potassium-selective channel through which potassium ions pass in accordance with their electrochemical gradient. The channel displays rapid activation and inactivation kinetics. It plays a role in the regulation of the frequency, shape and duration of action potentials in Purkinje cells. Required for normal survival of cerebellar neurons, probably via its role in regulating the duration and frequency of action potentials that in turn regulate the activity of voltage-gated Ca(2+) channels and cellular Ca(2+) homeostasis. Required for normal motor function. Plays a role in the reorganization of the cortical actin cytoskeleton and the formation of actin veil structures in neuronal growth cones via its interaction with HAX1 and the Arp2/3 complex. The protein is Voltage-gated potassium channel KCNC3 of Rattus norvegicus (Rat).